Reading from the N-terminus, the 801-residue chain is tRNA(Met) cytidine acetyltransferase TmcA (801 aa).

ATP is bound by residues Gln228, 256–265 (GRGKSSAVGL), and Arg412. An N-acetyltransferase domain is found at 457-637 (EELFLKNEEE…YTVIVVKPLS (181 aa)). Residues 562–564 (IAT), 569–575 (MGKGLGS), and Glu602 contribute to the acetyl-CoA site.

Belongs to the RNA cytidine acetyltransferase family. TmcA subfamily.

The protein resides in the cytoplasm. The catalysed reaction is cytidine(34) in elongator tRNA(Met) + acetyl-CoA + ATP + H2O = N(4)-acetylcytidine(34) in elongator tRNA(Met) + ADP + phosphate + CoA + H(+). Functionally, catalyzes the formation of N(4)-acetylcytidine (ac(4)C) at the wobble position of tRNA(Met), by using acetyl-CoA as an acetyl donor and ATP (or GTP). This is tRNA(Met) cytidine acetyltransferase TmcA from Thermofilum pendens (strain DSM 2475 / Hrk 5).